Here is a 208-residue protein sequence, read N- to C-terminus: Molybdenum cofactor guanylyltransferase (208 aa).

Residues 10 to 12 (LAG), lysine 23, aspartate 69, and aspartate 103 each bind GTP. Aspartate 103 contacts Mg(2+).

The protein belongs to the MobA family. Monomer. Mg(2+) is required as a cofactor.

It is found in the cytoplasm. The enzyme catalyses Mo-molybdopterin + GTP + H(+) = Mo-molybdopterin guanine dinucleotide + diphosphate. Its function is as follows. Transfers a GMP moiety from GTP to Mo-molybdopterin (Mo-MPT) cofactor (Moco or molybdenum cofactor) to form Mo-molybdopterin guanine dinucleotide (Mo-MGD) cofactor. This chain is Molybdenum cofactor guanylyltransferase, found in Mesorhizobium japonicum (strain LMG 29417 / CECT 9101 / MAFF 303099) (Mesorhizobium loti (strain MAFF 303099)).